The primary structure comprises 261 residues: Mannose-specific lectin 2 (261 aa).

A signal peptide spans 1-23 (MAKLLLFLLPAILGLLIPRSAVA). Bulb-type lectin domains follow at residues 26-131 (TNYL…PWVP) and 145-252 (DNLL…SKRS). Residues 51–55 (QNDCN), Tyr-59, Trp-63, Gln-64, 170–174 (QGDCN), Tyr-178, and 182–185 (YGWQ) contribute to the beta-D-mannose site. Positions 51–59 (QNDCNLVLY) match the Carbohydrate-binding motif 1 motif. Disulfide bonds link Cys-54/Cys-74 and Cys-173/Cys-195. A Carbohydrate-binding motif 2 motif is present at residues 170–178 (QGDCNLVLY).

As to quaternary structure, forms heterotetramer of 2 chains 1 and 2 chains 2 arranged as a dimer of chain 1 and chain 2 heterodimers.

Mannose-specific lectin. Shows agglutinating activity towards erythrocytes from rabbit. The chain is Mannose-specific lectin 2 from Colocasia esculenta (Wild taro).